The following is a 366-amino-acid chain: D-alanine--D-alanine ligase (366 aa).

In terms of domain architecture, ATP-grasp spans 145–348 (KRLLDDAGLA…YQSLITKLIE (204 aa)). 175-230 (VEQLGLPLFIKPANLGSSVGISKVNNEAEFNAALSMAFEYDLKVIIESAIVGREIE) lines the ATP pocket. Mg(2+) is bound by residues Asp-302, Glu-315, and Asn-317.

It belongs to the D-alanine--D-alanine ligase family. The cofactor is Mg(2+). Requires Mn(2+) as cofactor.

It localises to the cytoplasm. It carries out the reaction 2 D-alanine + ATP = D-alanyl-D-alanine + ADP + phosphate + H(+). The protein operates within cell wall biogenesis; peptidoglycan biosynthesis. Functionally, cell wall formation. In Proteus mirabilis (strain HI4320), this protein is D-alanine--D-alanine ligase.